Reading from the N-terminus, the 479-residue chain is Arf-GAP domain and FG repeat-containing protein 2 (479 aa).

Residues 27–153 (EVWCRRVREL…WYVPPEQVKG (127 aa)) enclose the Arf-GAP domain. The C4-type zinc finger occupies 47 to 70 (CFECAQRGVTYVDITVGSFVCTTC). Disordered stretches follow at residues 150–223 (QVKG…TKKA) and 450–479 (LSQPAGISTNPFMTGSSAFASKPPTTNPFL). The span at 157-167 (SKGSVSATPVQ) shows a compositional bias: polar residues. At Lys-174 the chain carries N6-acetyllysine. Low complexity predominate over residues 194-218 (SSQPGSQSQARSSSQARSSQPPSHS). Positions 454–479 (AGISTNPFMTGSSAFASKPPTTNPFL) are enriched in polar residues.

In terms of assembly, interacts with EPS15R.

In Mus musculus (Mouse), this protein is Arf-GAP domain and FG repeat-containing protein 2 (Agfg2).